The sequence spans 58 residues: MTQVVLGENEGIDSALRRFKRQVSKAGILADVKYHRHFETPLERRKRKAVAARRKRRF.

The protein belongs to the bacterial ribosomal protein bS21 family.

This chain is Small ribosomal subunit protein bS21B, found in Trichormus variabilis (strain ATCC 29413 / PCC 7937) (Anabaena variabilis).